We begin with the raw amino-acid sequence, 301 residues long: NADH-ubiquinone oxidoreductase chain 1 (301 aa).

Transmembrane regions (helical) follow at residues 4–24 (IIPILLAVAFLTLLERKVLGY), 62–82 (LALFIIAPTLALTLALMMWIP), 96–116 (ILFMLALSSLAVYAILWSGWA), 140–160 (LAIIILSILLMNGSFTLSTLI), 165–185 (YTWLIMPSWPLAMMWFISTIA), 216–236 (LFFLAEYANIIMMNALTIILF), 247–267 (EMYTANFMLKALLFTTFFLWI), and 279–299 (LMHLLWKNFLPLTLVMCMWHV).

It belongs to the complex I subunit 1 family.

The protein resides in the mitochondrion inner membrane. It catalyses the reaction a ubiquinone + NADH + 5 H(+)(in) = a ubiquinol + NAD(+) + 4 H(+)(out). Core subunit of the mitochondrial membrane respiratory chain NADH dehydrogenase (Complex I) that is believed to belong to the minimal assembly required for catalysis. Complex I functions in the transfer of electrons from NADH to the respiratory chain. The immediate electron acceptor for the enzyme is believed to be ubiquinone. In Nyctalus noctula (Noctule bat), this protein is NADH-ubiquinone oxidoreductase chain 1 (MT-ND1).